The sequence spans 283 residues: 2,3,4,5-tetrahydropyridine-2,6-dicarboxylate N-succinyltransferase (283 aa).

Substrate-binding residues include Arg-107 and Asp-144.

Belongs to the transferase hexapeptide repeat family. In terms of assembly, homotrimer.

It is found in the cytoplasm. It catalyses the reaction (S)-2,3,4,5-tetrahydrodipicolinate + succinyl-CoA + H2O = (S)-2-succinylamino-6-oxoheptanedioate + CoA. It participates in amino-acid biosynthesis; L-lysine biosynthesis via DAP pathway; LL-2,6-diaminopimelate from (S)-tetrahydrodipicolinate (succinylase route): step 1/3. This Rhodospirillum rubrum (strain ATCC 11170 / ATH 1.1.1 / DSM 467 / LMG 4362 / NCIMB 8255 / S1) protein is 2,3,4,5-tetrahydropyridine-2,6-dicarboxylate N-succinyltransferase.